The chain runs to 148 residues: Ribonuclease H (148 aa).

An RNase H type-1 domain is found at 1–142 (MSDSVEMFTD…ADQLANRGVD (142 aa)). Residues aspartate 10, glutamate 48, aspartate 70, and aspartate 134 each coordinate Mg(2+).

This sequence belongs to the RNase H family. In terms of assembly, monomer. The cofactor is Mg(2+).

Its subcellular location is the cytoplasm. It carries out the reaction Endonucleolytic cleavage to 5'-phosphomonoester.. Functionally, endonuclease that specifically degrades the RNA of RNA-DNA hybrids. The polypeptide is Ribonuclease H (Pseudomonas putida (strain ATCC 700007 / DSM 6899 / JCM 31910 / BCRC 17059 / LMG 24140 / F1)).